Reading from the N-terminus, the 90-residue chain is UPF0237 protein PAE3582 (90 aa).

The region spanning 5 to 74 (VVSVLGADRV…LEEEGKRLGV (70 aa)) is the ACT domain.

This sequence belongs to the UPF0237 family.

This Pyrobaculum aerophilum (strain ATCC 51768 / DSM 7523 / JCM 9630 / CIP 104966 / NBRC 100827 / IM2) protein is UPF0237 protein PAE3582.